The following is a 562-amino-acid chain: MAASAKRKQEEKHLKMLRDMTGLPHNRKCFDCDQRGPTYVNMTVGSFVCTSCSGSLRGLNPPHRVKSISMTTFTQQEIEFLQKHGNEVCKQIWLGLFDDRSSAIPDFRDPQKVKEFLQEKYEKKRWYVPPEQAKVVASVHASISGSSASSTSSTPEVKPLKSLLGDSAPTLHLNKGTPSQSPVVGRSQGQQQEKKQFDLLSDLGSDIFAAPAPQSTATANFANFAHFNSHAAQNSANADFANFDAFGQSSGSSNFGGFPTASHSPFQPQTTGGSAASVNANFAHFDNFPKSSSADFGTFNTSQSHQTASAVSKVSTNKAGLQTADKYAALANLDNIFSAGQGGDQGSGFGTTGKAPVGSVVSVPSQSSASSDKYAALAELDSVFSSAATSSNAYTSTSNASSNVFGTVPVVASAQTQPASSSVPAPFGATPSTNPFVAAAGPSVASSTNPFQTNARGATAATFGTASMSMPTGFGTPAPYSLPTSFSGSFQQPAFPAQAAFPQQTAFSQQPNGAGFAAFGQTKPVVTPFGQVAAAGVSSNPFMTGAPTGQFPTGSSSTNPFL.

An Arf-GAP domain is found at 11-135 (EKHLKMLRDM…WYVPPEQAKV (125 aa)). The C4-type zinc finger occupies 29–52 (CFDCDQRGPTYVNMTVGSFVCTSC). The segment at 145 to 193 (GSSASSTSSTPEVKPLKSLLGDSAPTLHLNKGTPSQSPVVGRSQGQQQE) is disordered. Ser-167 carries the phosphoserine modification. Over residues 176 to 191 (GTPSQSPVVGRSQGQQ) the composition is skewed to polar residues. Thr-177 bears the Phosphothreonine mark. Phosphoserine is present on residues Ser-181 and Ser-362. O-linked (GlcNAc) serine glycosylation is present at Ser-367.

Interacts with EPS15R and EPS15. Interacts with FCHO1. In terms of processing, O-glycosylated. In terms of tissue distribution, ubiquitously expressed.

Its subcellular location is the nucleus. It localises to the cytoplasmic vesicle. Required for vesicle docking or fusion during acrosome biogenesis. May play a role in RNA trafficking or localization. In case of infection by HIV-1, acts as a cofactor for viral Rev and promotes movement of Rev-responsive element-containing RNAs from the nuclear periphery to the cytoplasm. This step is essential for HIV-1 replication. This is Arf-GAP domain and FG repeat-containing protein 1 (AGFG1) from Homo sapiens (Human).